The following is a 1111-amino-acid chain: Putative leucine--tRNA ligase, cytoplasmic (1111 aa).

The 'HIGH' region signature appears at 74–84 (PYMNGALHLGH). Position 460 is a phosphoserine (Ser-460). Positions 737–741 (KMSKS) match the 'KMSKS' region motif. ATP is bound at residue Lys-740.

Belongs to the class-I aminoacyl-tRNA synthetase family.

Its subcellular location is the cytoplasm. The catalysed reaction is tRNA(Leu) + L-leucine + ATP = L-leucyl-tRNA(Leu) + AMP + diphosphate. In Schizosaccharomyces pombe (strain 972 / ATCC 24843) (Fission yeast), this protein is Putative leucine--tRNA ligase, cytoplasmic (lrs1).